The sequence spans 313 residues: Small ribosomal subunit biogenesis GTPase RsgA (313 aa).

Positions 80-237 (KVALRQVIVS…LIDTPGIKEF (158 aa)) constitute a CP-type G domain. GTP-binding positions include 129–132 (NKVD) and 180–188 (GQSGVGKSS). Zn(2+)-binding residues include cysteine 261, cysteine 266, histidine 268, and cysteine 274.

It belongs to the TRAFAC class YlqF/YawG GTPase family. RsgA subfamily. In terms of assembly, monomer. Associates with 30S ribosomal subunit, binds 16S rRNA. Zn(2+) serves as cofactor.

Its subcellular location is the cytoplasm. In terms of biological role, one of several proteins that assist in the late maturation steps of the functional core of the 30S ribosomal subunit. Helps release RbfA from mature subunits. May play a role in the assembly of ribosomal proteins into the subunit. Circularly permuted GTPase that catalyzes slow GTP hydrolysis, GTPase activity is stimulated by the 30S ribosomal subunit. The protein is Small ribosomal subunit biogenesis GTPase RsgA of Borrelia recurrentis (strain A1).